The sequence spans 183 residues: MNLSAKTVVVIAIGAALYGIGGLPMFGIPVFANTTLKPAMAVLALFSVLYGPIVGFLVGFIGHWVTDLFAGWGVWLTWILGSGIVGMIIGLFPILTKRRIEVGLFDKKDFFIFVVLAFVGNVIGYGTSAFLDTVLYAEPFTKVFAQLCIIAAGNTVLIAVVGYFILTNLAKRKKQSTHLTEAQ.

5 consecutive transmembrane segments (helical) span residues 8-28 (VVVI…MFGI), 41-61 (AVLA…VGFI), 74-94 (VWLT…LFPI), 110-130 (FFIF…TSAF), and 147-167 (LCII…FILT).

The protein belongs to the UPF0397 family.

The protein localises to the cell membrane. The protein is UPF0397 protein VSAL_I1988 of Aliivibrio salmonicida (strain LFI1238) (Vibrio salmonicida (strain LFI1238)).